The chain runs to 121 residues: C-X-C motif chemokine 11-6 (121 aa).

The N-terminal stretch at 1 to 20 (MKTLAAFLLLSCLIAGEVNG) is a signal peptide. 2 disulfides stabilise this stretch: cysteine 29–cysteine 56 and cysteine 31–cysteine 73. Positions 95 to 121 (QSVPHSTTTGTVKSSMTSSTSAPTAFK) are disordered. The segment covering 100–115 (STTTGTVKSSMTSSTS) has biased composition (low complexity).

Belongs to the intercrine alpha (chemokine CxC) family.

The protein resides in the secreted. Ligand for cxcr3.2. Chemotactic for macrophages. This chain is C-X-C motif chemokine 11-6, found in Danio rerio (Zebrafish).